Reading from the N-terminus, the 367-residue chain is MKFQLHRTDGLARRGTLSLTHGVVETPAFMPVGTYGAVKTMSPADLQVINAHIVLGNTFHLWLRPGLQVIEAHGGLHRFMGWDGPILTDSGGFQVFSLGVLRKITEQGVKFKSPVNGDTCFLTPEESMRIQYVLNSDIVMIFDECTPYPADERAVGESMELSLRWAERSRQAHDEGGNRNGLFGIVQGGMYEKLRDESLAGLLDIGFDGYAIGGLSVGEPKADMRRILRHTAPGLPAGKPRYLMGVGTPADIVDAVAQGMDMFDCVLPTRNARNGWLYTRTGVIKLRNSQYRLDTRPADEQCTCYTCRHFSRAYLHHLQRTGEILGARLNTLHNLYYYQQLMGEIRTAIENGQFQEYAQAFQAQTAS.

The active-site Proton acceptor is the Asp89. Residues 89–93 (DSGGF), Asp143, Gln187, and Gly214 each bind substrate. The RNA binding stretch occupies residues 245 to 251 (GVGTPAD). Asp264 serves as the catalytic Nucleophile. An RNA binding; important for wobble base 34 recognition region spans residues 269–273 (TRNAR). Residues Cys302, Cys304, Cys307, and His333 each contribute to the Zn(2+) site.

Belongs to the queuine tRNA-ribosyltransferase family. In terms of assembly, homodimer. Within each dimer, one monomer is responsible for RNA recognition and catalysis, while the other monomer binds to the replacement base PreQ1. Requires Zn(2+) as cofactor.

It catalyses the reaction 7-aminomethyl-7-carbaguanine + guanosine(34) in tRNA = 7-aminomethyl-7-carbaguanosine(34) in tRNA + guanine. The protein operates within tRNA modification; tRNA-queuosine biosynthesis. In terms of biological role, catalyzes the base-exchange of a guanine (G) residue with the queuine precursor 7-aminomethyl-7-deazaguanine (PreQ1) at position 34 (anticodon wobble position) in tRNAs with GU(N) anticodons (tRNA-Asp, -Asn, -His and -Tyr). Catalysis occurs through a double-displacement mechanism. The nucleophile active site attacks the C1' of nucleotide 34 to detach the guanine base from the RNA, forming a covalent enzyme-RNA intermediate. The proton acceptor active site deprotonates the incoming PreQ1, allowing a nucleophilic attack on the C1' of the ribose to form the product. After dissociation, two additional enzymatic reactions on the tRNA convert PreQ1 to queuine (Q), resulting in the hypermodified nucleoside queuosine (7-(((4,5-cis-dihydroxy-2-cyclopenten-1-yl)amino)methyl)-7-deazaguanosine). This Nitrosospira multiformis (strain ATCC 25196 / NCIMB 11849 / C 71) protein is Queuine tRNA-ribosyltransferase.